The sequence spans 89 residues: Small ribosomal subunit protein uS17 (89 aa).

This sequence belongs to the universal ribosomal protein uS17 family. As to quaternary structure, part of the 30S ribosomal subunit.

In terms of biological role, one of the primary rRNA binding proteins, it binds specifically to the 5'-end of 16S ribosomal RNA. The chain is Small ribosomal subunit protein uS17 from Leptospira borgpetersenii serovar Hardjo-bovis (strain JB197).